The sequence spans 243 residues: MHTTALVLFSGGQDSTTCLALALSKYQRVETIAFDYRQRHLVELDARLIVLNEIRARFPQWASKLGEDHLLDLAVLGEVSDTSLTRDTAFKMEQSGLPNTFVPGRNLLFLTLAAAVAYRRDLQVMVTGVCETDFSGYPDCRDDTIKAMQLALSLGMDKRFLIETPLMWIDKAATWALAYELGEKSGTPGGGQALVDLIIEHTHTCYLGDRQHRHAWGYGCGSCPACELRARGYERYCAARTAG.

9–19 serves as a coordination point for ATP; it reads FSGGQDSTTCL. Zn(2+)-binding residues include Cys205, Cys220, Cys223, and Cys226.

Belongs to the QueC family. It depends on Zn(2+) as a cofactor.

The catalysed reaction is 7-carboxy-7-deazaguanine + NH4(+) + ATP = 7-cyano-7-deazaguanine + ADP + phosphate + H2O + H(+). Its pathway is purine metabolism; 7-cyano-7-deazaguanine biosynthesis. Its function is as follows. Catalyzes the ATP-dependent conversion of 7-carboxy-7-deazaguanine (CDG) to 7-cyano-7-deazaguanine (preQ(0)). This chain is 7-cyano-7-deazaguanine synthase, found in Albidiferax ferrireducens (strain ATCC BAA-621 / DSM 15236 / T118) (Rhodoferax ferrireducens).